Here is a 261-residue protein sequence, read N- to C-terminus: Cytochrome c oxidase subunit 3 (261 aa).

Topologically, residues 1-15 (MTHQTHAYHMVDPSP) are mitochondrial matrix. A helical transmembrane segment spans residues 16–34 (WPLTGALSALLMTSGLTMW). Over 35-40 (FHYHSV) the chain is Mitochondrial intermembrane. Residues 41 to 66 (VLLFLGLMTNTLTMFQWWRDVVREGT) traverse the membrane as a helical segment. At 67 to 72 (FQGHHT) the chain is on the mitochondrial matrix side. Residues 73–105 (PVVQEGLRYGMILFITSEVLFFTGFFWAFYHSS) traverse the membrane as a helical segment. Over 106-128 (LAPTPELGSYWPPVGVYPLNPLE) the chain is Mitochondrial intermembrane. Residues 129-152 (VPLLNTSVLLASGVTITWAHHSLM) traverse the membrane as a helical segment. Over 153–155 (EGN) the chain is Mitochondrial matrix. Residues 156-183 (RKNMLQALLITILLGVYFTLLQMFEYYE) form a helical membrane-spanning segment. The Mitochondrial intermembrane segment spans residues 184-190 (ASFTISD). A helical membrane pass occupies residues 191-223 (GIYGSTFFVTTGFHGLHVIIGSTFLLTCFIRQL). At 224-232 (KFHFTSNHH) the chain is on the mitochondrial matrix side. Residues 233 to 256 (FGFEAAAWYWHFVDVVWLFLYLSI) traverse the membrane as a helical segment. The Mitochondrial intermembrane portion of the chain corresponds to 257–261 (YWWGS).

The protein belongs to the cytochrome c oxidase subunit 3 family. Component of the cytochrome c oxidase (complex IV, CIV), a multisubunit enzyme composed of 14 subunits. The complex is composed of a catalytic core of 3 subunits MT-CO1, MT-CO2 and MT-CO3, encoded in the mitochondrial DNA, and 11 supernumerary subunits COX4I, COX5A, COX5B, COX6A, COX6B, COX6C, COX7A, COX7B, COX7C, COX8 and NDUFA4, which are encoded in the nuclear genome. The complex exists as a monomer or a dimer and forms supercomplexes (SCs) in the inner mitochondrial membrane with NADH-ubiquinone oxidoreductase (complex I, CI) and ubiquinol-cytochrome c oxidoreductase (cytochrome b-c1 complex, complex III, CIII), resulting in different assemblies (supercomplex SCI(1)III(2)IV(1) and megacomplex MCI(2)III(2)IV(2)).

The protein localises to the mitochondrion inner membrane. The enzyme catalyses 4 Fe(II)-[cytochrome c] + O2 + 8 H(+)(in) = 4 Fe(III)-[cytochrome c] + 2 H2O + 4 H(+)(out). Functionally, component of the cytochrome c oxidase, the last enzyme in the mitochondrial electron transport chain which drives oxidative phosphorylation. The respiratory chain contains 3 multisubunit complexes succinate dehydrogenase (complex II, CII), ubiquinol-cytochrome c oxidoreductase (cytochrome b-c1 complex, complex III, CIII) and cytochrome c oxidase (complex IV, CIV), that cooperate to transfer electrons derived from NADH and succinate to molecular oxygen, creating an electrochemical gradient over the inner membrane that drives transmembrane transport and the ATP synthase. Cytochrome c oxidase is the component of the respiratory chain that catalyzes the reduction of oxygen to water. Electrons originating from reduced cytochrome c in the intermembrane space (IMS) are transferred via the dinuclear copper A center (CU(A)) of subunit 2 and heme A of subunit 1 to the active site in subunit 1, a binuclear center (BNC) formed by heme A3 and copper B (CU(B)). The BNC reduces molecular oxygen to 2 water molecules using 4 electrons from cytochrome c in the IMS and 4 protons from the mitochondrial matrix. This is Cytochrome c oxidase subunit 3 (MT-CO3) from Mammuthus primigenius (Siberian woolly mammoth).